The sequence spans 165 residues: MHAKINPKKVEMFNLLKEFLDGKDSVFFLDYRGLTVATLTELRNRVENEKGELKVVKNNIMKRVLKDKHMEGLDSYLLGPTAVVTAVDEANVIAKIFYEFVKTSSLKVKGGFVLGEVYDEAKLNAYSKLPTKKESISLFMNVLKAPISKLARTLKALSDVKDVKV.

Belongs to the universal ribosomal protein uL10 family. As to quaternary structure, part of the ribosomal stalk of the 50S ribosomal subunit. The N-terminus interacts with L11 and the large rRNA to form the base of the stalk. The C-terminus forms an elongated spine to which L12 dimers bind in a sequential fashion forming a multimeric L10(L12)X complex.

Functionally, forms part of the ribosomal stalk, playing a central role in the interaction of the ribosome with GTP-bound translation factors. The chain is Large ribosomal subunit protein uL10 from Borrelia turicatae (strain 91E135).